The sequence spans 491 residues: Probable glycine dehydrogenase (decarboxylating) subunit 2 (491 aa).

Lysine 264 is subject to N6-(pyridoxal phosphate)lysine.

The protein belongs to the GcvP family. C-terminal subunit subfamily. In terms of assembly, the glycine cleavage system is composed of four proteins: P, T, L and H. In this organism, the P 'protein' is a heterodimer of two subunits. Requires pyridoxal 5'-phosphate as cofactor.

It catalyses the reaction N(6)-[(R)-lipoyl]-L-lysyl-[glycine-cleavage complex H protein] + glycine + H(+) = N(6)-[(R)-S(8)-aminomethyldihydrolipoyl]-L-lysyl-[glycine-cleavage complex H protein] + CO2. In terms of biological role, the glycine cleavage system catalyzes the degradation of glycine. The P protein binds the alpha-amino group of glycine through its pyridoxal phosphate cofactor; CO(2) is released and the remaining methylamine moiety is then transferred to the lipoamide cofactor of the H protein. This is Probable glycine dehydrogenase (decarboxylating) subunit 2 from Coxiella burnetii (strain CbuK_Q154) (Coxiella burnetii (strain Q154)).